Reading from the N-terminus, the 130-residue chain is Small ribosomal subunit protein uS8 (130 aa).

The protein belongs to the universal ribosomal protein uS8 family. As to quaternary structure, part of the 30S ribosomal subunit. Contacts proteins S5 and S12.

In terms of biological role, one of the primary rRNA binding proteins, it binds directly to 16S rRNA central domain where it helps coordinate assembly of the platform of the 30S subunit. The polypeptide is Small ribosomal subunit protein uS8 (Nitrosococcus oceani (strain ATCC 19707 / BCRC 17464 / JCM 30415 / NCIMB 11848 / C-107)).